Here is a 72-residue protein sequence, read N- to C-terminus: Translation initiation factor IF-1 (72 aa).

The region spanning 1–72 is the S1-like domain; that stretch reads MAKEELLEMR…TKGRITYRFK (72 aa).

The protein belongs to the IF-1 family. Component of the 30S ribosomal translation pre-initiation complex which assembles on the 30S ribosome in the order IF-2 and IF-3, IF-1 and N-formylmethionyl-tRNA(fMet); mRNA recruitment can occur at any time during PIC assembly.

It localises to the cytoplasm. Functionally, one of the essential components for the initiation of protein synthesis. Stabilizes the binding of IF-2 and IF-3 on the 30S subunit to which N-formylmethionyl-tRNA(fMet) subsequently binds. Helps modulate mRNA selection, yielding the 30S pre-initiation complex (PIC). Upon addition of the 50S ribosomal subunit IF-1, IF-2 and IF-3 are released leaving the mature 70S translation initiation complex. This is Translation initiation factor IF-1 from Sphingopyxis alaskensis (strain DSM 13593 / LMG 18877 / RB2256) (Sphingomonas alaskensis).